We begin with the raw amino-acid sequence, 298 residues long: HTH-type transcriptional regulator TsaR (298 aa).

Positions M1–T58 constitute an HTH lysR-type domain. A DNA-binding region (H-T-H motif) is located at residues L18 to Q37. 2 residues coordinate toluene-4-sulfonate: S98 and A100.

This sequence belongs to the LysR transcriptional regulatory family. As to quaternary structure, homotetramer. Dimer of dimers related by a twofold axis.

With respect to regulation, sensitive to oxygen. In terms of biological role, regulates expression of the tsaMBCD1 operon and of tsaT in response to p-toluenesulfonate (TSA). Acts by binding directly to the promoter region. Binding to the tsa promoter depends on TSA concentration. This chain is HTH-type transcriptional regulator TsaR (tsaR), found in Comamonas testosteroni (Pseudomonas testosteroni).